Consider the following 330-residue polypeptide: PDZ and LIM domain protein 4 (330 aa).

One can recognise a PDZ domain in the interval 1-84 (MTHAVTLRGP…HLTLSVSRPE (84 aa)). 2 disordered regions span residues 104-154 (DPEA…NEVT) and 219-239 (EAGEGGDRPGSGGSRNLKPAA). Ser-111, Ser-115, Ser-118, Ser-119, Ser-124, and Ser-134 each carry phosphoserine. Over residues 111–122 (SPATSRRSSISG) the composition is skewed to polar residues. One can recognise an LIM zinc-binding domain in the interval 255–305 (CTRCGHGIVGTIVKARDKLYHPECFMCSDCGLNLKQRGYFFLDERLYCENH).

Homodimer. Interacts (via C-terminus only or via combined C-terminus and LIM domain, but not LIM domain only) with PTPN13 (via the second or fourth PDZ domains). Found in a complex with PTPN13 and TRIP6. Interacts (via PDZ domain) with ACTN1 and ACTN2 (via C-terminal SDL residues). Interacts (via PDZ domain) with TRIP6 (via the second LIM domain or via the third LIM domain plus C-terminus). Interacts (via LIM domain) with GRIA1 (via C-terminus); this interaction as well as the interaction with alpha-actinin is required for their colocalization in early endosomes. Interacts with PDLIM1. Forms (via LIM domain) a heterodimer with PDLIM3. Interacts directly with SRC (via kinase domain and to a lesser extent the SH2 domain). Post-translationally, phosphorylated on tyrosine residue(s). Can be dephosphorylated by PTPN13. Detected in several tissues, most prominent in brain and heart of adults. Expressed in embryonic fibroblasts.

Its subcellular location is the cytoplasm. It localises to the cytoskeleton. It is found in the cell projection. The protein localises to the dendritic spine. The protein resides in the early endosome membrane. Its subcellular location is the recycling endosome membrane. It localises to the nucleus. It is found in the perinuclear region. The protein localises to the lamellipodium. The protein resides in the synapse. Its subcellular location is the synaptosome. In terms of biological role, suppresses SRC activation by recognizing and binding to active SRC and facilitating PTPN13-mediated dephosphorylation of SRC 'Tyr-419' leading to its inactivation. Inactivated SRC dissociates from this protein allowing the initiation of a new SRC inactivation cycle. Involved in reorganization of the actin cytoskeleton. In nonmuscle cells, binds to ACTN1 (alpha-actinin-1), increases the affinity of ACTN1 to F-actin (filamentous actin), and promotes formation of actin stress fibers. Involved in regulation of the synaptic AMPA receptor transport in dendritic spines of hippocampal pyramidal neurons directing the receptors toward an insertion at the postsynaptic membrane. Links endosomal surface-internalized GRIA1-containing AMPA receptors to the alpha-actinin/actin cytoskeleton. Increases AMPA receptor-mediated excitatory postsynaptic currents in neurons. This is PDZ and LIM domain protein 4 (Pdlim4) from Rattus norvegicus (Rat).